Consider the following 216-residue polypeptide: Ribosome maturation factor RimP (216 aa).

Belongs to the RimP family.

Its subcellular location is the cytoplasm. Required for maturation of 30S ribosomal subunits. This chain is Ribosome maturation factor RimP, found in Bartonella quintana (strain Toulouse) (Rochalimaea quintana).